A 663-amino-acid polypeptide reads, in one-letter code: DNA ligase (663 aa).

NAD(+) contacts are provided by residues 31 to 35, 80 to 81, and glutamate 109; these read DSEYD and SL. Catalysis depends on lysine 111, which acts as the N6-AMP-lysine intermediate. The NAD(+) site is built by arginine 132, glutamate 166, lysine 282, and lysine 306. 4 residues coordinate Zn(2+): cysteine 400, cysteine 403, cysteine 418, and cysteine 423. The 79-residue stretch at 585-663 folds into the BRCT domain; the sequence is ELHPVFGEKT…EQMMVDALRN (79 aa).

This sequence belongs to the NAD-dependent DNA ligase family. LigA subfamily. It depends on Mg(2+) as a cofactor. Requires Mn(2+) as cofactor.

The catalysed reaction is NAD(+) + (deoxyribonucleotide)n-3'-hydroxyl + 5'-phospho-(deoxyribonucleotide)m = (deoxyribonucleotide)n+m + AMP + beta-nicotinamide D-nucleotide.. DNA ligase that catalyzes the formation of phosphodiester linkages between 5'-phosphoryl and 3'-hydroxyl groups in double-stranded DNA using NAD as a coenzyme and as the energy source for the reaction. It is essential for DNA replication and repair of damaged DNA. This Macrococcus caseolyticus (strain JCSC5402) (Macrococcoides caseolyticum) protein is DNA ligase.